Consider the following 615-residue polypeptide: DNA mismatch repair protein MutL (615 aa).

A disordered region spans residues 362–397; it reads HFAEPAVREPVAPRYSPAPASGSRPAASWPNAQPGY. Residues 373–391 are compositionally biased toward low complexity; it reads APRYSPAPASGSRPAASWP.

The protein belongs to the DNA mismatch repair MutL/HexB family.

This protein is involved in the repair of mismatches in DNA. It is required for dam-dependent methyl-directed DNA mismatch repair. May act as a 'molecular matchmaker', a protein that promotes the formation of a stable complex between two or more DNA-binding proteins in an ATP-dependent manner without itself being part of a final effector complex. The chain is DNA mismatch repair protein MutL from Escherichia coli O45:K1 (strain S88 / ExPEC).